A 152-amino-acid chain; its full sequence is NADH-quinone oxidoreductase subunit A 2 (152 aa).

3 helical membrane passes run 8-28 (FGKV…GYVS), 63-83 (FYVV…LFPW), and 90-110 (LGGF…LGLV).

Belongs to the complex I subunit 3 family. As to quaternary structure, NDH-1 is composed of 14 different subunits. Subunits NuoA, H, J, K, L, M, N constitute the membrane sector of the complex.

Its subcellular location is the cell inner membrane. The enzyme catalyses a quinone + NADH + 5 H(+)(in) = a quinol + NAD(+) + 4 H(+)(out). In terms of biological role, NDH-1 shuttles electrons from NADH, via FMN and iron-sulfur (Fe-S) centers, to quinones in the respiratory chain. The immediate electron acceptor for the enzyme in this species is believed to be a menaquinone. Couples the redox reaction to proton translocation (for every two electrons transferred, four hydrogen ions are translocated across the cytoplasmic membrane), and thus conserves the redox energy in a proton gradient. The chain is NADH-quinone oxidoreductase subunit A 2 from Chloroherpeton thalassium (strain ATCC 35110 / GB-78).